The sequence spans 470 residues: UDP-N-acetylmuramoylalanine--D-glutamate ligase (470 aa).

Residue Gly124 to Thr130 coordinates ATP.

It belongs to the MurCDEF family.

Its subcellular location is the cytoplasm. It catalyses the reaction UDP-N-acetyl-alpha-D-muramoyl-L-alanine + D-glutamate + ATP = UDP-N-acetyl-alpha-D-muramoyl-L-alanyl-D-glutamate + ADP + phosphate + H(+). It functions in the pathway cell wall biogenesis; peptidoglycan biosynthesis. Its function is as follows. Cell wall formation. Catalyzes the addition of glutamate to the nucleotide precursor UDP-N-acetylmuramoyl-L-alanine (UMA). The chain is UDP-N-acetylmuramoylalanine--D-glutamate ligase from Prochlorococcus marinus (strain SARG / CCMP1375 / SS120).